The sequence spans 397 residues: Elongation factor Tu (397 aa).

Residues 10 to 206 form the tr-type G domain; the sequence is KPHVNIGTIG…AIDSYIPTPE (197 aa). The interval 19–26 is G1; sequence GHVDHGKT. 19-26 contacts GTP; that stretch reads GHVDHGKT. A Mg(2+)-binding site is contributed by T26. A G2 region spans residues 60 to 64; it reads GITIN. The G3 stretch occupies residues 81 to 84; sequence DCPG. GTP-binding positions include 81-85 and 136-139; these read DCPGH and NKAD. The interval 136 to 139 is G4; it reads NKAD. A G5 region spans residues 174-176; it reads SAL.

It belongs to the TRAFAC class translation factor GTPase superfamily. Classic translation factor GTPase family. EF-Tu/EF-1A subfamily. As to quaternary structure, monomer.

The protein resides in the cytoplasm. The enzyme catalyses GTP + H2O = GDP + phosphate + H(+). GTP hydrolase that promotes the GTP-dependent binding of aminoacyl-tRNA to the A-site of ribosomes during protein biosynthesis. The protein is Elongation factor Tu of Clostridium botulinum (strain Loch Maree / Type A3).